Consider the following 1002-residue polypeptide: yemanuclein (1002 aa).

Residues 80–85 (KKKTKK) carry the Nuclear localization signal motif. Disordered regions lie at residues 193–358 (AIIK…KKVV), 395–428 (VSTD…GQEN), and 642–725 (KLKA…AKQV). Low complexity predominate over residues 207 to 217 (SSSSESSSSSS). A compositionally biased stretch (acidic residues) spans 218–262 (GDDDENDDGNNEEDDESDSEDDSEENDESDSEDDSESESLEDEDS). 2 tandem repeats follow at residues 230–241 (EDDESDSEDDSE) and 242–253 (ENDESDSEDDSE). The tract at residues 230–253 (EDDESDSEDDSEENDESDSEDDSE) is 2 X 12 AA tandem repeats. Composition is skewed to low complexity over residues 286-320 (TGKS…RPST), 336-358 (QPSS…KKVV), and 395-404 (VSTDVSSSDS). Over residues 408–427 (ESEHGRADRQAGQHGKDGQE) the composition is skewed to basic and acidic residues. Positions 653–667 (PASASPKPVGVVSAP) are enriched in low complexity. The segment covering 679–689 (AVEDPRSRGNS) has biased composition (basic and acidic residues). 2 positions are modified to phosphoserine: S685 and S689. Low complexity predominate over residues 690 to 701 (DTDSATSASSNS). A phosphoserine mark is found at S885, S886, and S887. The tract at residues 901 to 928 (SKPQKKVQSKPKNKTQNRGRSSLGAVGQ) is disordered. A compositionally biased stretch (basic residues) spans 903–917 (PQKKVQSKPKNKTQN).

In terms of processing, the N-terminus is blocked. In terms of tissue distribution, oocyte specific.

The protein resides in the nucleus. It localises to the nucleoplasm. It is found in the chromosome. Its subcellular location is the centromere. The protein localises to the kinetochore. Its function is as follows. May play a key role in egg organization. May be a transcriptional regulator having a role in chromatin remodeling in concert with Hira, a histone chaperone. Involved in chromosome segregation by affecting kinetochores function in the first meiotic division. This Drosophila melanogaster (Fruit fly) protein is yemanuclein.